Reading from the N-terminus, the 166-residue chain is Urease accessory protein UreE (166 aa).

It belongs to the UreE family.

The protein localises to the cytoplasm. Involved in urease metallocenter assembly. Binds nickel. Probably functions as a nickel donor during metallocenter assembly. This chain is Urease accessory protein UreE, found in Pseudomonas savastanoi pv. phaseolicola (strain 1448A / Race 6) (Pseudomonas syringae pv. phaseolicola (strain 1448A / Race 6)).